We begin with the raw amino-acid sequence, 481 residues long: Aspartyl/glutamyl-tRNA(Asn/Gln) amidotransferase subunit B (481 aa).

It belongs to the GatB/GatE family. GatB subfamily. Heterotrimer of A, B and C subunits.

The catalysed reaction is L-glutamyl-tRNA(Gln) + L-glutamine + ATP + H2O = L-glutaminyl-tRNA(Gln) + L-glutamate + ADP + phosphate + H(+). It catalyses the reaction L-aspartyl-tRNA(Asn) + L-glutamine + ATP + H2O = L-asparaginyl-tRNA(Asn) + L-glutamate + ADP + phosphate + 2 H(+). In terms of biological role, allows the formation of correctly charged Asn-tRNA(Asn) or Gln-tRNA(Gln) through the transamidation of misacylated Asp-tRNA(Asn) or Glu-tRNA(Gln) in organisms which lack either or both of asparaginyl-tRNA or glutaminyl-tRNA synthetases. The reaction takes place in the presence of glutamine and ATP through an activated phospho-Asp-tRNA(Asn) or phospho-Glu-tRNA(Gln). The sequence is that of Aspartyl/glutamyl-tRNA(Asn/Gln) amidotransferase subunit B from Carboxydothermus hydrogenoformans (strain ATCC BAA-161 / DSM 6008 / Z-2901).